A 256-amino-acid polypeptide reads, in one-letter code: Small ribosomal subunit protein uS2 (256 aa).

This sequence belongs to the universal ribosomal protein uS2 family.

This is Small ribosomal subunit protein uS2 from Brucella anthropi (strain ATCC 49188 / DSM 6882 / CCUG 24695 / JCM 21032 / LMG 3331 / NBRC 15819 / NCTC 12168 / Alc 37) (Ochrobactrum anthropi).